Reading from the N-terminus, the 217-residue chain is Flagellin B2 (217 aa).

A propeptide spanning residues 1–12 (MKVFEFLKGKRG) is cleaved from the precursor.

It belongs to the archaeal flagellin family.

The protein resides in the archaeal flagellum. Functionally, flagellin is the subunit protein which polymerizes to form the filaments of archaeal flagella. This chain is Flagellin B2 (flaB2), found in Methanocaldococcus jannaschii (strain ATCC 43067 / DSM 2661 / JAL-1 / JCM 10045 / NBRC 100440) (Methanococcus jannaschii).